A 390-amino-acid polypeptide reads, in one-letter code: Adherens junction-associated protein 1 (390 aa).

Positions 1–37 (MWITQLLGIRSGPPLGSHAWILIAIFQLAMDFIICES) are cleaved as a signal peptide. At 38–262 (ESPGKAYKHL…NDTSGLAVHQ (225 aa)) the chain is on the extracellular side. Positions 218–253 (LQNPGIHNGKKSPGRISTTDPNPGNGKTARPPRIPN) are disordered. The chain crosses the membrane as a helical span at residues 263–283 (IITITVSLIMVIAALITTLVL). Residues 283–390 (LKNCCAQSGN…VSEKWFEISC (108 aa)) are targeting signals. Over 284 to 390 (KNCCAQSGNA…VSEKWFEISC (107 aa)) the chain is Cytoplasmic.

It is found in the basolateral cell membrane. It localises to the apical cell membrane. Its subcellular location is the cell junction. The protein localises to the adherens junction. In terms of biological role, may play a role in cell adhesion and cell migration. This chain is Adherens junction-associated protein 1 (ajap1), found in Xenopus tropicalis (Western clawed frog).